A 28-amino-acid polypeptide reads, in one-letter code: FLAKKVAKTVAKQAAKQGAKYVVNKQME.

Position 28 is a glutamic acid 1-amide (Glu28).

As to expression, expressed by the venom gland.

The protein resides in the secreted. The chain is Short cationic peptide-1a from Cupiennius salei (American wandering spider).